Consider the following 666-residue polypeptide: Threonine--tRNA ligase (666 aa).

Residues 1–64 enclose the TGS domain; it reads MSDTVSLTFP…VDGKIEIVTR (64 aa). The catalytic stretch occupies residues 245–553; it reads DHRKLGREMD…LIENFAGHMP (309 aa). Positions 347, 398, and 530 each coordinate Zn(2+).

It belongs to the class-II aminoacyl-tRNA synthetase family. In terms of assembly, homodimer. It depends on Zn(2+) as a cofactor.

It localises to the cytoplasm. The catalysed reaction is tRNA(Thr) + L-threonine + ATP = L-threonyl-tRNA(Thr) + AMP + diphosphate + H(+). In terms of biological role, catalyzes the attachment of threonine to tRNA(Thr) in a two-step reaction: L-threonine is first activated by ATP to form Thr-AMP and then transferred to the acceptor end of tRNA(Thr). Also edits incorrectly charged L-seryl-tRNA(Thr). The protein is Threonine--tRNA ligase of Allorhizobium ampelinum (strain ATCC BAA-846 / DSM 112012 / S4) (Agrobacterium vitis (strain S4)).